A 300-amino-acid polypeptide reads, in one-letter code: L-arabinolactonase (300 aa).

Positions 22, 156, and 205 each coordinate a divalent metal cation.

It belongs to the SMP-30/CGR1 family. It depends on a divalent metal cation as a cofactor.

The catalysed reaction is L-arabinono-1,4-lactone + H2O = L-arabinonate + H(+). Catalyzes the cleavage of L-arabino-gamma-lactone to L-arabonate. Is involved in a degradation pathway of L-arabinose that allows A.brasilense to grow on L-arabinose as a sole carbon source. Can also use D-galactono-1,4-lactone as substrate in vitro; however, the enzyme is probably not involved in the metabolism of D-galactose in vivo. The chain is L-arabinolactonase (araB) from Azospirillum brasilense.